The primary structure comprises 192 residues: MTVVNKSFLTFLVFFCQILFPLNASALEAPRTVKAWASVLGDNIAETWNEPQHVDLYVPAITWHARFAYDKEKTDRYNERPWGAGIGKSRWDEKGNWHGLYVMAFKDSYNKWEPIAGYGWEATWRPLPDDAFHVGLGYTLGVTARDNWDYIPIPLVLPLASVGYGPATFQMTYIPGTYNNGNVYFAWLRLQF.

The signal sequence occupies residues 1 to 26; that stretch reads MTVVNKSFLTFLVFFCQILFPLNASA. Catalysis depends on residues His64, Asp107, and Ser108.

This sequence belongs to the lipid A palmitoyltransferase family. Homodimer.

It is found in the cell outer membrane. It carries out the reaction a lipid A + a 1,2-diacyl-sn-glycero-3-phosphocholine = a hepta-acyl lipid A + a 2-acyl-sn-glycero-3-phosphocholine. The catalysed reaction is a lipid IVA + a 1,2-diacyl-sn-glycero-3-phosphocholine = a lipid IVB + a 2-acyl-sn-glycero-3-phosphocholine. The enzyme catalyses a lipid IIA + a 1,2-diacyl-sn-glycero-3-phosphocholine = a lipid IIB + a 2-acyl-sn-glycero-3-phosphocholine. Its function is as follows. Transfers a fatty acid residue from the sn-1 position of a phospholipid to the N-linked hydroxyfatty acid chain on the proximal unit of lipid A or its precursors. This is Lipid A acyltransferase PagP from Cronobacter turicensis (strain DSM 18703 / CCUG 55852 / LMG 23827 / z3032).